The chain runs to 75 residues: Small ribosomal subunit protein bS18 (75 aa).

This sequence belongs to the bacterial ribosomal protein bS18 family. Part of the 30S ribosomal subunit. Forms a tight heterodimer with protein bS6.

Binds as a heterodimer with protein bS6 to the central domain of the 16S rRNA, where it helps stabilize the platform of the 30S subunit. This chain is Small ribosomal subunit protein bS18, found in Dinoroseobacter shibae (strain DSM 16493 / NCIMB 14021 / DFL 12).